The primary structure comprises 427 residues: Trigger factor (427 aa).

In terms of domain architecture, PPIase FKBP-type spans 163–248 (GDTVVIDFVG…IHEVKAKEVP (86 aa)).

Belongs to the FKBP-type PPIase family. Tig subfamily.

The protein localises to the cytoplasm. It carries out the reaction [protein]-peptidylproline (omega=180) = [protein]-peptidylproline (omega=0). Its function is as follows. Involved in protein export. Acts as a chaperone by maintaining the newly synthesized protein in an open conformation. Functions as a peptidyl-prolyl cis-trans isomerase. In Streptococcus pneumoniae serotype 2 (strain D39 / NCTC 7466), this protein is Trigger factor.